Here is a 271-residue protein sequence, read N- to C-terminus: D-methionine-binding lipoprotein MetQ (271 aa).

The N-terminal stretch at 1–22 (MAFKFKTFAAVGALIGSLALVG) is a signal peptide. Residue Cys-23 is the site of N-palmitoyl cysteine attachment. Residue Cys-23 is the site of S-diacylglycerol cysteine attachment.

The protein belongs to the NlpA lipoprotein family.

Its subcellular location is the cell membrane. Functionally, this protein is a component of a D-methionine permease, a binding protein-dependent, ATP-driven transport system. The chain is D-methionine-binding lipoprotein MetQ (metQ) from Escherichia coli (strain K12).